The chain runs to 123 residues: MPTIQQLIRKPRQPKVKRSKSQHLESCPQKRGVCTRVYTTTPKKPNSAMRKVAKVRLTNGFEVISYIPGESHNLQEHSVVLIRGGRVKDLPGVRYHILRGVLDTQGVKDRKQRRSKYGAKRPK.

The disordered stretch occupies residues 1 to 28; the sequence is MPTIQQLIRKPRQPKVKRSKSQHLESCP. The segment covering 9–21 has biased composition (basic residues); sequence RKPRQPKVKRSKS. Asp89 bears the 3-methylthioaspartic acid mark.

It belongs to the universal ribosomal protein uS12 family. In terms of assembly, part of the 30S ribosomal subunit. Contacts proteins S8 and S17. May interact with IF1 in the 30S initiation complex.

Its function is as follows. With S4 and S5 plays an important role in translational accuracy. In terms of biological role, interacts with and stabilizes bases of the 16S rRNA that are involved in tRNA selection in the A site and with the mRNA backbone. Located at the interface of the 30S and 50S subunits, it traverses the body of the 30S subunit contacting proteins on the other side and probably holding the rRNA structure together. The combined cluster of proteins S8, S12 and S17 appears to hold together the shoulder and platform of the 30S subunit. In Dinoroseobacter shibae (strain DSM 16493 / NCIMB 14021 / DFL 12), this protein is Small ribosomal subunit protein uS12.